The sequence spans 159 residues: Small ribosomal subunit protein uS7m (159 aa).

The protein belongs to the universal ribosomal protein uS7 family. Part of the small ribosomal subunit.

Its subcellular location is the mitochondrion. Functionally, one of the primary rRNA binding proteins, it binds directly to the small rRNA where it nucleates assembly of the head domain of the small subunit. The polypeptide is Small ribosomal subunit protein uS7m (RPS7) (Reclinomonas americana).